The chain runs to 407 residues: Ribosomal protein uL3-like (407 aa).

Positions 1 to 31 (MSHRKFSAPRHGHLGFLPHKRSHRHRGKVKT) are enriched in basic residues. Disordered stretches follow at residues 1–35 (MSHR…WPRD) and 387–407 (AFMG…SGDL).

Belongs to the universal ribosomal protein uL3 family. In terms of assembly, component of the large ribosomal subunit in striated muscle cells.

Functionally, heart- and skeletal muscle-specific component of the ribosome, which regulates muscle function. Component of the large ribosomal subunit in striated muscle cells: replaces the RPL3 paralog in the ribosome in these cells. The ribosome is a large ribonucleoprotein complex responsible for the synthesis of proteins in the cell. Inhibits myotube growth and muscle function. The chain is Ribosomal protein uL3-like from Homo sapiens (Human).